Here is a 123-residue protein sequence, read N- to C-terminus: Ribosome-binding factor A (123 aa).

This sequence belongs to the RbfA family. Monomer. Binds 30S ribosomal subunits, but not 50S ribosomal subunits or 70S ribosomes.

The protein localises to the cytoplasm. Its function is as follows. One of several proteins that assist in the late maturation steps of the functional core of the 30S ribosomal subunit. Associates with free 30S ribosomal subunits (but not with 30S subunits that are part of 70S ribosomes or polysomes). Required for efficient processing of 16S rRNA. May interact with the 5'-terminal helix region of 16S rRNA. The chain is Ribosome-binding factor A from Neisseria meningitidis serogroup C (strain 053442).